Reading from the N-terminus, the 129-residue chain is Fluoride-specific ion channel FluC (129 aa).

The next 4 membrane-spanning stretches (helical) occupy residues 4 to 24 (VLIVMLGGFIGANLRYWLGEW), 30 to 50 (GFPTGTFVINAIGCFLLGWLL), 63 to 83 (WSLLLGTGLIGSFTTFSTFSV), and 95 to 115 (IVASLYVFGSIFLGIGLAYIG). Residues Gly73 and Thr76 each contribute to the Na(+) site.

Belongs to the fluoride channel Fluc/FEX (TC 1.A.43) family.

The protein resides in the cell membrane. The catalysed reaction is fluoride(in) = fluoride(out). Na(+) is not transported, but it plays an essential structural role and its presence is essential for fluoride channel function. Its function is as follows. Fluoride-specific ion channel. Important for reducing fluoride concentration in the cell, thus reducing its toxicity. This chain is Fluoride-specific ion channel FluC, found in Oceanobacillus iheyensis (strain DSM 14371 / CIP 107618 / JCM 11309 / KCTC 3954 / HTE831).